Here is an 83-residue protein sequence, read N- to C-terminus: Mu-theraphotoxin-Hhn2c (83 aa).

The signal sequence occupies residues 1-21 (MKASMFLALAGLVLLFVVGYA). Positions 22 to 48 (SESEEKEFPIELLSKIFAVDVFKGEER) are excised as a propeptide. 3 disulfide bridges follow: C50–C65, C57–C70, and C64–C77. L81 is modified (leucine amide).

It belongs to the neurotoxin 10 (Hwtx-1) family. 15 (Hntx-3) subfamily. In terms of assembly, monomer. In terms of tissue distribution, expressed by the venom gland.

Its subcellular location is the secreted. Its function is as follows. Lethal neurotoxin. Selectively blocks tetrodotoxin-sensitive voltage-gated sodium channels (Nav). Does not affect tetrodotoxin-resistant voltage-gated sodium channels or calcium channels. The sequence is that of Mu-theraphotoxin-Hhn2c from Cyriopagopus hainanus (Chinese bird spider).